A 699-amino-acid chain; its full sequence is MAELMLLSEIADPTRFFTDNLLSPEDWDSTLYSGLDEVAEEQAQLFRCVEQDVPFDSSSLDVGMDVSPPEPPWDPLPIFPDLQVKSEPSSPCSSSSLSSESSHLSTEPPSQVPGVGEVLHVKMESLAPPLCLLGDDPASPFETVQITVGSASDDLSDIQTKLEPASPSSSVHSEASLLSADSPSQPFIGEEVLEVKTESPSPPGCLLWDVPASSLGAVQISMGPSPDSSSGKAPATRKPPLQPKPVVLTTVPVPPRAGPTSAAVLLQPLVQQPAVSPVVLIQGAIRVQPEGPAPAAPRPERKSIVPAPMPGNSCPPEVDAKLLKRQQRMIKNRESACQSRRKKKEYLQGLEARLQAVLADNQQLRRENAALRRRLEALLAENSGLKLGSGNRKVVCIMVFLLFIAFNFGPVSISEPPPAPMSPRMSREEPRPQRHLLGFSEPGPAHGMEPLREAAQSPGEQQPSSAGRPSFRNLTAFPGGAKELLLRDLDQLFLSSDCRHFNRTESLRLADELSGWVQRHQRGRRKIPHRAQERQKSQLRKKSPPVKPVPTQPPGPPERDPVGQLQLYRHPGRSQPEFLDAIDRREDTFYVVSFRRDHLLLPAISHNKTSRPKMSLVMPAMAPNETVSGRGPPGDYEEMMQIECEVMDTRVIHIKTSTVPPSLRKQPSPSPGNTTGGPLPGSAASPAHQASQPLYLNHP.

Ala2 bears the N-acetylalanine mark. Residues 2-393 (AELMLLSEIA…GLKLGSGNRK (392 aa)) are Cytoplasmic-facing. Disordered regions lie at residues 59 to 114 (SLDV…QVPG), 218 to 246 (VQISMGPSPDSSSGKAPATRKPPLQPKPV), and 290 to 313 (EGPAPAAPRPERKSIVPAPMPGNS). Positions 68-78 (PPEPPWDPLPI) are enriched in pro residues. Residues 86–109 (SEPSSPCSSSSLSSESSHLSTEPP) are compositionally biased toward low complexity. A bZIP domain is found at 322–385 (LLKRQQRMIK…EALLAENSGL (64 aa)). The tract at residues 324–344 (KRQQRMIKNRESACQSRRKKK) is basic motif. The tract at residues 347–354 (LQGLEARL) is leucine-zipper. Residues 394–414 (VVCIMVFLLFIAFNFGPVSIS) traverse the membrane as a helical; Signal-anchor for type II membrane protein segment. At 415-699 (EPPPAPMSPR…ASQPLYLNHP (285 aa)) the chain is on the lumenal side. Residues 417 to 474 (PPAPMSPRMSREEPRPQRHLLGFSEPGPAHGMEPLREAAQSPGEQQPSSAGRPSFRNL) form a disordered region. The segment covering 458-467 (PGEQQPSSAG) has biased composition (polar residues). N-linked (GlcNAc...) asparagine glycans are attached at residues Asn473 and Asn502. Basic residues predominate over residues 519–529 (RHQRGRRKIPH). A disordered region spans residues 519–563 (RHQRGRRKIPHRAQERQKSQLRKKSPPVKPVPTQPPGPPERDPVG). Pro residues predominate over residues 545-556 (PVKPVPTQPPGP). 3 N-linked (GlcNAc...) asparagine glycosylation sites follow: Asn607, Asn624, and Asn673. Residues 657–699 (STVPPSLRKQPSPSPGNTTGGPLPGSAASPAHQASQPLYLNHP) form a disordered region. Residues 680–693 (PGSAASPAHQASQP) show a composition bias toward low complexity.

It belongs to the bZIP family. ATF subfamily. As to quaternary structure, homodimer and heterodimer with ATF6-alpha. The dimer interacts with the nuclear transcription factor Y (NF-Y) trimer through direct binding to NF-Y subunit C (NF-YC). Post-translationally, N-glycosylated. During unfolded protein response, a fragment of approximately 60 kDa containing the cytoplasmic transcription factor domain is released by proteolysis. The cleavage is probably performed sequentially by site-1 (MBTPS1, S1P) and site-2 (MBTPS2, S2P) proteases.

The protein resides in the endoplasmic reticulum membrane. The protein localises to the nucleus. Its function is as follows. Precursor of the transcription factor form (Processed cyclic AMP-dependent transcription factor ATF-6 beta), which is embedded in the endoplasmic reticulum membrane. Endoplasmic reticulum stress promotes processing of this form, releasing the transcription factor form that translocates into the nucleus, where it activates transcription of genes involved in the unfolded protein response (UPR). Functionally, transcription factor that acts in the unfolded protein response (UPR) pathway by activating UPR target genes induced during ER stress. Binds DNA on the 5'-CCAC[GA]-3' half of the ER stress response element (ERSE) (5'-CCAATN(9)CCAC[GA]-3') when NF-Y is bound to ERSE. The polypeptide is Cyclic AMP-dependent transcription factor ATF-6 beta (Atf6b) (Mus musculus (Mouse)).